A 163-amino-acid chain; its full sequence is Staphylokinase (163 aa).

The signal sequence occupies residues methionine 1–alanine 27.

This sequence belongs to the staphylokinase family.

It is found in the secreted. Functionally, potent plasminogen activator that converts plasminogen into plasmin. It forms a 1:1 complex with plasmin, which in turn activates other plasminogen molecules. The sequence is that of Staphylokinase (sak) from Staphylococcus aureus (strain MRSA252).